A 147-amino-acid polypeptide reads, in one-letter code: Protein archease (147 aa).

Ca(2+) contacts are provided by D17, D146, and I147.

Belongs to the archease family.

Its function is as follows. Activates the tRNA-splicing ligase complex by facilitating the enzymatic turnover of catalytic subunit RtcB. Acts by promoting the guanylylation of RtcB, a key intermediate step in tRNA ligation. Can also alter the NTP specificity of RtcB such that ATP, dGTP or ITP is used efficiently. This Pyrobaculum calidifontis (strain DSM 21063 / JCM 11548 / VA1) protein is Protein archease.